A 401-amino-acid chain; its full sequence is Argininosuccinate synthase (401 aa).

8–16 (AYSGGLDTS) is a binding site for ATP. Tyr-87 lines the L-citrulline pocket. Gly-117 is a binding site for ATP. L-aspartate-binding residues include Thr-119, Asn-123, and Asp-124. Asn-123 is an L-citrulline binding site. L-citrulline is bound by residues Arg-127, Ser-175, Glu-259, and Tyr-271.

The protein belongs to the argininosuccinate synthase family. Type 1 subfamily. Homotetramer.

It localises to the cytoplasm. The catalysed reaction is L-citrulline + L-aspartate + ATP = 2-(N(omega)-L-arginino)succinate + AMP + diphosphate + H(+). Its pathway is amino-acid biosynthesis; L-arginine biosynthesis; L-arginine from L-ornithine and carbamoyl phosphate: step 2/3. The sequence is that of Argininosuccinate synthase from Arthrobacter sp. (strain FB24).